We begin with the raw amino-acid sequence, 172 residues long: Large ribosomal subunit protein uL10 (172 aa).

Belongs to the universal ribosomal protein uL10 family. As to quaternary structure, part of the ribosomal stalk of the 50S ribosomal subunit. The N-terminus interacts with L11 and the large rRNA to form the base of the stalk. The C-terminus forms an elongated spine to which L12 dimers bind in a sequential fashion forming a multimeric L10(L12)X complex.

Forms part of the ribosomal stalk, playing a central role in the interaction of the ribosome with GTP-bound translation factors. In Rhodopseudomonas palustris (strain BisB5), this protein is Large ribosomal subunit protein uL10.